The chain runs to 162 residues: Transcriptional repressor NrdR (162 aa).

Positions 1–21 (MNCPDCGDEQTRVIDTETSAD) are disordered. A zinc finger lies at 3-34 (CPDCGDEQTRVIDTETSADGTSVRRRRECQRC). An ATP-cone domain is found at 49–139 (LQVKKRNGTI…VYKAFSEPQE (91 aa)).

The protein belongs to the NrdR family. The cofactor is Zn(2+).

Functionally, negatively regulates transcription of bacterial ribonucleotide reductase nrd genes and operons by binding to NrdR-boxes. In Halorubrum lacusprofundi (strain ATCC 49239 / DSM 5036 / JCM 8891 / ACAM 34), this protein is Transcriptional repressor NrdR.